The primary structure comprises 649 residues: Endoplasmic reticulum membrane protein 65 (649 aa).

Residues 1-55 (MGSNTSPGQADPLESENESSLTSRFLPNKRDGGKDNESVIPEKEEPDLNEPVLAV) form a disordered region. Residues 1–165 (MGSNTSPGQA…LATPYAIEKT (165 aa)) are Cytoplasmic-facing. Over residues 28 to 43 (NKRDGGKDNESVIPEK) the composition is skewed to basic and acidic residues. Position 94 is a phosphoserine (S94). The chain crosses the membrane as a helical span at residues 166–186 (FLFGWFVSVDSFLYIFTLFPI). Topologically, residues 187–302 (RVLISFFTLS…NFWNPAGWMT (116 aa)) are lumenal. The N-linked (GlcNAc...) asparagine glycan is linked to N215. Residues 303–323 (FFYYFAISLAYMVLHTLVLLY) form a helical membrane-spanning segment. Residues 324 to 366 (QIITLNVTVNSYSNAVLALLMSNQLVEIKGAVFKKFEKENLFQ) are Cytoplasmic-facing. A helical transmembrane segment spans residues 367 to 387 (LTCSDVVERFQITIMVIIIFL). Topologically, residues 388-414 (RNLAELYTTSSLDQPLLTFKRLKTLLA) are lumenal. The chain crosses the membrane as a helical span at residues 415–435 (PFFWVIGSELFVDWLKHAFII). At 436–479 (KFNYIKPSIYSRFTDVLCHDYVASGAQLTQTVTGCSQQVARRMG) the chain is on the cytoplasmic side. A helical membrane pass occupies residues 480–500 (LPVLPLVCVFIRTSMQTWSMF). The Lumenal segment spans residues 501 to 557 (RSTHSMKQEIAKSIGTIFPTKDNYVYYLPNKEANTYNAGKEASWETLLLSVVRGKSG). The chain crosses the membrane as a helical span at residues 558-578 (IAFLFFMAIMLKLLLGKAILA). The Cytoplasmic segment spans residues 579 to 649 (ITQSRYESMQ…RYAMHSKRIW (71 aa)).

It belongs to the TAPT1 family. Interacts with slp1.

The protein resides in the endoplasmic reticulum membrane. Functionally, may be involved in membrane protein folding. The chain is Endoplasmic reticulum membrane protein 65 from Schizosaccharomyces pombe (strain 972 / ATCC 24843) (Fission yeast).